Here is a 421-residue protein sequence, read N- to C-terminus: C4-dicarboxylate transport protein (421 aa).

The next 8 helical transmembrane spans lie at 9–29 (VQVI…PDVG), 39–59 (FINA…VLGI), 76–96 (FIYF…VVNI), 145–165 (GDIL…AALG), 185–205 (IIGY…AYTI), 219–239 (LMMS…NIIC), 316–336 (VFGV…LMLT), and 348–368 (FIVL…GLAL).

Belongs to the dicarboxylate/amino acid:cation symporter (DAACS) (TC 2.A.23) family.

The protein localises to the cell membrane. Functionally, responsible for the transport of succinate and fumarate, but not malate, across the membrane. The protein is C4-dicarboxylate transport protein (dctA) of Bacillus subtilis (strain 168).